The primary structure comprises 289 residues: MNTPQNSPLGQATAYLDQYDASLLFPIARATKRAEIGVTGALPFLGADMWTAFELSWLNLRGKPQVALARFTVPCESPNIIESKSFKLYLNSFNNTRFADVDAVKARLRADLSEAVWRDAGKNVSPDAAAPPSIGVTLLLPELFDREPIYELDGLSLDRLDVECTHYTPAPDLLRVVPDEAPVSEVLVSNLLKSNCPVTGQPDWASVQISYSGAPIDQEGLLQYLVSFRNHNEFHEQCVERIFMDLWTRCKPVRLAVYARYTRRGGLDINPFRTSYAQALPANVRNARQ.

Residue 81–83 participates in substrate binding; sequence IES. NADPH is bound at residue 83-84; it reads SK. Catalysis depends on cysteine 196, which acts as the Thioimide intermediate. The Proton donor role is filled by aspartate 203. 235 to 236 contributes to the substrate binding site; that stretch reads HE. 264–265 provides a ligand contact to NADPH; the sequence is RG.

This sequence belongs to the GTP cyclohydrolase I family. QueF type 2 subfamily. Homodimer.

Its subcellular location is the cytoplasm. It carries out the reaction 7-aminomethyl-7-carbaguanine + 2 NADP(+) = 7-cyano-7-deazaguanine + 2 NADPH + 3 H(+). The protein operates within tRNA modification; tRNA-queuosine biosynthesis. Functionally, catalyzes the NADPH-dependent reduction of 7-cyano-7-deazaguanine (preQ0) to 7-aminomethyl-7-deazaguanine (preQ1). This is NADPH-dependent 7-cyano-7-deazaguanine reductase from Albidiferax ferrireducens (strain ATCC BAA-621 / DSM 15236 / T118) (Rhodoferax ferrireducens).